The following is a 338-amino-acid chain: Fructose-1,6-bisphosphatase class 1 1 (338 aa).

The Mg(2+) site is built by glutamate 94, aspartate 116, leucine 118, and aspartate 119. Residues 119 to 122 (DGSS), asparagine 210, and lysine 276 contribute to the substrate site. A Mg(2+)-binding site is contributed by glutamate 282.

The protein belongs to the FBPase class 1 family. In terms of assembly, homotetramer. Requires Mg(2+) as cofactor.

Its subcellular location is the cytoplasm. It carries out the reaction beta-D-fructose 1,6-bisphosphate + H2O = beta-D-fructose 6-phosphate + phosphate. The protein operates within carbohydrate biosynthesis; gluconeogenesis. The protein is Fructose-1,6-bisphosphatase class 1 1 of Paraburkholderia xenovorans (strain LB400).